Consider the following 33-residue polypeptide: Fatty acid-binding protein, intestinal (33 aa).

The protein belongs to the calycin superfamily. Fatty-acid binding protein (FABP) family. Intestine.

It localises to the cytoplasm. Functionally, FABPs are thought to play a role in the intracellular transport of long-chain fatty acids and their acyl-CoA esters. In Rhamdia sapo (South American catfish), this protein is Fatty acid-binding protein, intestinal (fabp2).